Reading from the N-terminus, the 78-residue chain is MEQAPEDQGPQREPHNEWTLELLEELKNEAVRHFPRIWLHGLGQHIYETYGDTWAGVEAIIRILQQLLFIHFQNWVST.

The homooligomerization stretch occupies residues 1–42; it reads MEQAPEDQGPQREPHNEWTLELLEELKNEAVRHFPRIWLHGL.

Belongs to the HIV-1 VPR protein family. Homooligomer, may form homodimer. Interacts with p6-gag region of the Pr55 Gag precursor protein through a (Leu-X-X)4 motif near the C-terminus of the P6gag protein. Interacts with host UNG. May interact with host RAD23A/HHR23A. Interacts with host VPRBP/DCAF1, leading to hijack the CUL4A-RBX1-DDB1-DCAF1/VPRBP complex, mediating ubiquitination of host proteins such as TERT and ZGPAT and arrest of the cell cycle in G2 phase. In terms of processing, phosphorylated on several residues by host. These phosphorylations regulate VPR activity for the nuclear import of the HIV-1 pre-integration complex.

The protein resides in the virion. It is found in the host nucleus. It localises to the host extracellular space. Its function is as follows. During virus replication, may deplete host UNG protein, and incude G2-M cell cycle arrest. Acts by targeting specific host proteins for degradation by the 26S proteasome, through association with the cellular CUL4A-DDB1 E3 ligase complex by direct interaction with host VPRPB/DCAF-1. Cell cycle arrest reportedly occurs within hours of infection and is not blocked by antiviral agents, suggesting that it is initiated by the VPR carried into the virion. Additionally, VPR induces apoptosis in a cell cycle dependent manner suggesting that these two effects are mechanistically linked. Detected in the serum and cerebrospinal fluid of AIDS patient, VPR may also induce cell death to bystander cells. In terms of biological role, during virus entry, plays a role in the transport of the viral pre-integration (PIC) complex to the host nucleus. This function is crucial for viral infection of non-dividing macrophages. May act directly at the nuclear pore complex, by binding nucleoporins phenylalanine-glycine (FG)-repeat regions. The polypeptide is Protein Vpr (Human immunodeficiency virus type 1 group M subtype B (isolate PCV12) (HIV-1)).